The chain runs to 71 residues: uncharacterized protein (71 aa).

Residues 1 to 23 form the signal peptide; the sequence is MTLLIILILKYLLCLENLKNISL. N-linked (GlcNAc...) asparagine glycosylation is found at asparagine 20, asparagine 28, asparagine 44, and asparagine 50.

The protein localises to the secreted. This is an uncharacterized protein from Dictyostelium discoideum (Social amoeba).